Reading from the N-terminus, the 81-residue chain is Beta-catenin-interacting protein 1 (81 aa).

Ser-59 bears the Phosphoserine mark.

It belongs to the CTNNBIP1 family. As to quaternary structure, binds CTNNB1. As to expression, highly expressed in heart, brain, liver and skeletal muscle. Detected at low levels in kidney, testis and lung.

It is found in the cytoplasm. It localises to the nucleus. Prevents the interaction between CTNNB1 and TCF family members, and acts as a negative regulator of the Wnt signaling pathway. This is Beta-catenin-interacting protein 1 (Ctnnbip1) from Mus musculus (Mouse).